The sequence spans 1065 residues: FERM, ARHGEF and pleckstrin domain-containing protein 2 (1065 aa).

The 281-residue stretch at 44 to 324 (MRIRVKLLDS…EYHTFFRLSD (281 aa)) folds into the FERM domain. 2 positions are modified to phosphoserine: Ser389 and Ser440. Disordered stretches follow at residues 406–489 (SFYP…LKSH) and 504–534 (EQGA…HKHM). The span at 440–459 (STAAERSSGPSSSDGPSTQS) shows a compositional bias: low complexity. The segment covering 524-534 (DNQEEQKHKHM) has biased composition (basic and acidic residues). The DH domain maps to 538-729 (EAYFIAKEIL…TEVTTELQQS (192 aa)). One can recognise a PH 1 domain in the interval 758–855 (EFIREGCLHK…WMQDLNAAIQ (98 aa)). A phosphoserine mark is found at Ser863 and Ser880. The tract at residues 874–902 (TRTPRSSDEVSLEESEDGRGNRGSLEGNS) is disordered. Residues 930–1027 (ENQLSGYLLR…WMDVIKRASS (98 aa)) form the PH 2 domain.

In terms of assembly, interacts with PLXNA1. Interaction with PLXNA1 or PIP5K1C lowers its guanine nucleotide exchange activity. Dissociates from PLXNA1 when SEMA3A binds to the receptor. Interacts with PIP5K1C via its FERM domain. The interaction with PIP5K1C is enhanced by SEMA3A binding. Interacts with RAC1. In terms of tissue distribution, detected in adult brain, lung and testis. Detected in embryonic hippocampus and brain cortex.

Functionally, functions as a guanine nucleotide exchange factor that activates RAC1. May have relatively low activity. Plays a role in the response to class 3 semaphorins and remodeling of the actin cytoskeleton. Plays a role in TNFSF11-mediated osteoclast differentiation, especially in podosome rearrangement and reorganization of the actin cytoskeleton. Regulates the activation of ITGB3, integrin signaling and cell adhesion. The chain is FERM, ARHGEF and pleckstrin domain-containing protein 2 (Farp2) from Mus musculus (Mouse).